We begin with the raw amino-acid sequence, 122 residues long: Crustacean hyperglycemic hormones 7 (122 aa).

The N-terminal stretch at 1–26 (MSLAMTAFRMMAVALVVVVASSTTWA) is a signal peptide. Disulfide bonds link cysteine 55–cysteine 91, cysteine 71–cysteine 87, and cysteine 74–cysteine 100. At valine 120 the chain carries Valine amide.

It belongs to the arthropod CHH/MIH/GIH/VIH hormone family. In terms of tissue distribution, produced by the medulla terminalis X-organ in the eyestalks and transported to the sinus gland where they are stored and released.

Its subcellular location is the secreted. Its function is as follows. Hormone found in the sinus gland of isopods and decapods which controls the blood sugar level. Has a secretagogue action over the amylase released from the midgut gland. May act as a stress hormone and may be involved in the control of molting and reproduction. The chain is Crustacean hyperglycemic hormones 7 from Penaeus japonicus (Kuruma prawn).